Consider the following 155-residue polypeptide: Protein PtsT (155 aa).

This Geobacillus stearothermophilus (Bacillus stearothermophilus) protein is Protein PtsT (ptsT).